The primary structure comprises 465 residues: VGFKAGVKEYKLTYYTPSYETKDTDILAAFRVTPQPGVPPEEAGAAVAAESSTGTWTTVWTDGLTSLDRYKGRCYHIEPVAGEETQFIAYVAYPLDLFEEGSVTNMFTSIVGNVFGFKALRALRLEDLRIPPAYVKTFQGPPHGIQVERDKLNKYGRPLLGCTIKPKLGLSAKNYGRAVYECLRGGLDFTKDDENVNSQPFMRWRDRFLFCTEALYKAQSETGEIKGHYLNATAGTCEEMIKRAVFARELGVPIVMHDYLTGGFTANTSLAHYCRDNGLLLHIHRAMHAVIDRQKNHGIHFRVLAKALRMSGGDHIHSGTVVGKLEGEREITLGFVDLLRDDFIEKDRSRGLFFTQDWVSLPGVLPVASGGIHVWHMPALTEIFGDDSVLQFGGGTLGHPWGNAPGAVANRVALEACVQARNEGRDLAREGNEIIREASKWSPELAAACEIWKEIKFEFEAMDTL.

Lys-4 is subject to N6,N6,N6-trimethyllysine. Substrate-binding residues include Asn-113 and Thr-163. Catalysis depends on Lys-165, which acts as the Proton acceptor. Residue Lys-167 participates in substrate binding. Mg(2+)-binding residues include Lys-191, Asp-193, and Glu-194. The residue at position 191 (Lys-191) is an N6-carboxylysine. The Proton acceptor role is filled by His-284. Residues Arg-285, His-317, and Ser-369 each coordinate substrate.

It belongs to the RuBisCO large chain family. Type I subfamily. As to quaternary structure, heterohexadecamer of 8 large chains and 8 small chains; disulfide-linked. The disulfide link is formed within the large subunit homodimers. Mg(2+) is required as a cofactor. The disulfide bond which can form in the large chain dimeric partners within the hexadecamer appears to be associated with oxidative stress and protein turnover.

Its subcellular location is the plastid. It is found in the chloroplast. The enzyme catalyses 2 (2R)-3-phosphoglycerate + 2 H(+) = D-ribulose 1,5-bisphosphate + CO2 + H2O. The catalysed reaction is D-ribulose 1,5-bisphosphate + O2 = 2-phosphoglycolate + (2R)-3-phosphoglycerate + 2 H(+). Functionally, ruBisCO catalyzes two reactions: the carboxylation of D-ribulose 1,5-bisphosphate, the primary event in carbon dioxide fixation, as well as the oxidative fragmentation of the pentose substrate in the photorespiration process. Both reactions occur simultaneously and in competition at the same active site. This chain is Ribulose bisphosphate carboxylase large chain, found in Cornus oblonga.